Here is a 470-residue protein sequence, read N- to C-terminus: Syncoilin (470 aa).

Positions 1–43 (MASPEPLRGGDGARASREPHTEASFPLQESESPKEAKTFNPEA) are disordered. Positions 1–148 (MASPEPLRGG…TEGSLPAQPI (148 aa)) are head. Position 32 is a phosphoserine (serine 32). The region spanning 157–452 (SVEDLERLEA…AMLPKSLEQA (296 aa)) is the IF rod domain. Residues 158-192 (VEDLERLEARFQQCVQAVSQLEEERDQLIHELVLL) form a coil 1A region. The segment at 193 to 219 (REPALQEVQQVHQDILAAYKLHAQAEL) is linker 1. The tract at residues 220-297 (ERDGLREEIR…KEQLQQQLEA (78 aa)) is coil 1b. Residues 298–337 (PPTQSDGHFLQESRRLSTQFENLMAESRQGLEEEYEPQLL) are linker 2. At serine 314 the chain carries Phosphoserine. Residues 338-445 (RLLERKEAGT…EELSTYKAML (108 aa)) are coil 2. The segment at 446–470 (PKSLEQADAPTSQAGGVEAQSPGTV) is disordered. The tract at residues 446 to 470 (PKSLEQADAPTSQAGGVEAQSPGTV) is tail.

Belongs to the intermediate filament family. May link the dystrophin-associated glycoprotein complex (DAPC) to intracellular desmin (DES) filaments. Interacts with DES and DTNA. As to expression, detected strongly in skeletal muscle and heart and weakly in lung (at protein level). Highly expressed in skeletal muscle and lung and weakly in lung and testis.

It is found in the cytoplasm. Its subcellular location is the perinuclear region. In terms of biological role, atypical type III intermediate filament (IF) protein that may play a supportive role in the efficient coupling of mechanical stress between the myofibril and fiber exterior. May facilitate lateral force transmission during skeletal muscle contraction. Does not form homofilaments nor heterofilaments with other IF proteins. This is Syncoilin (Sync) from Mus musculus (Mouse).